The sequence spans 470 residues: Bifunctional protein ArgHA (470 aa).

An argininosuccinate lyase region spans residues 1 to 470; the sequence is MALWGGRFSQ…TSGISIRAAR (470 aa).

It in the N-terminal section; belongs to the lyase 1 family. Argininosuccinate lyase subfamily. In the C-terminal section; belongs to the acetyltransferase family. ArgA subfamily.

The protein resides in the cytoplasm. It carries out the reaction 2-(N(omega)-L-arginino)succinate = fumarate + L-arginine. The catalysed reaction is L-glutamate + acetyl-CoA = N-acetyl-L-glutamate + CoA + H(+). Its pathway is amino-acid biosynthesis; L-arginine biosynthesis; N(2)-acetyl-L-ornithine from L-glutamate: step 1/4. It participates in amino-acid biosynthesis; L-arginine biosynthesis; L-arginine from L-ornithine and carbamoyl phosphate: step 3/3. This is Bifunctional protein ArgHA (argHA) from Moritella profunda.